A 94-amino-acid chain; its full sequence is Pyrimidine/purine nucleoside phosphorylase (94 aa).

Belongs to the nucleoside phosphorylase PpnP family.

It catalyses the reaction a purine D-ribonucleoside + phosphate = a purine nucleobase + alpha-D-ribose 1-phosphate. The enzyme catalyses adenosine + phosphate = alpha-D-ribose 1-phosphate + adenine. It carries out the reaction cytidine + phosphate = cytosine + alpha-D-ribose 1-phosphate. The catalysed reaction is guanosine + phosphate = alpha-D-ribose 1-phosphate + guanine. It catalyses the reaction inosine + phosphate = alpha-D-ribose 1-phosphate + hypoxanthine. The enzyme catalyses thymidine + phosphate = 2-deoxy-alpha-D-ribose 1-phosphate + thymine. It carries out the reaction uridine + phosphate = alpha-D-ribose 1-phosphate + uracil. The catalysed reaction is xanthosine + phosphate = alpha-D-ribose 1-phosphate + xanthine. Functionally, catalyzes the phosphorolysis of diverse nucleosides, yielding D-ribose 1-phosphate and the respective free bases. Can use uridine, adenosine, guanosine, cytidine, thymidine, inosine and xanthosine as substrates. Also catalyzes the reverse reactions. The sequence is that of Pyrimidine/purine nucleoside phosphorylase from Psychromonas ingrahamii (strain DSM 17664 / CCUG 51855 / 37).